We begin with the raw amino-acid sequence, 167 residues long: SsrA-binding protein (167 aa).

The disordered stretch occupies residues 139–167 (QAHDKRHAEKEREWQRDKQRIMRAHNRNA). Residues 144-158 (RHAEKEREWQRDKQR) are compositionally biased toward basic and acidic residues.

This sequence belongs to the SmpB family.

It localises to the cytoplasm. Functionally, required for rescue of stalled ribosomes mediated by trans-translation. Binds to transfer-messenger RNA (tmRNA), required for stable association of tmRNA with ribosomes. tmRNA and SmpB together mimic tRNA shape, replacing the anticodon stem-loop with SmpB. tmRNA is encoded by the ssrA gene; the 2 termini fold to resemble tRNA(Ala) and it encodes a 'tag peptide', a short internal open reading frame. During trans-translation Ala-aminoacylated tmRNA acts like a tRNA, entering the A-site of stalled ribosomes, displacing the stalled mRNA. The ribosome then switches to translate the ORF on the tmRNA; the nascent peptide is terminated with the 'tag peptide' encoded by the tmRNA and targeted for degradation. The ribosome is freed to recommence translation, which seems to be the essential function of trans-translation. In Xylella fastidiosa (strain M12), this protein is SsrA-binding protein.